The sequence spans 256 residues: GDSL esterase/lipase CPRD49 (256 aa).

Positions 1 to 27 (MVGPARPQIVLFGSSIVQMSFGHGGWG) are cleaved as a signal peptide. Serine 15 (nucleophile) is an active-site residue. Residues asparagine 49 and asparagine 79 are each glycosylated (N-linked (GlcNAc...) asparagine). Residue histidine 213 is part of the active site. Asparagine 243 is a glycosylation site (N-linked (GlcNAc...) asparagine).

This sequence belongs to the 'GDSL' lipolytic enzyme family. As to expression, specifically expressed in anthers (stages 8-12).

It localises to the secreted. This Arabidopsis thaliana (Mouse-ear cress) protein is GDSL esterase/lipase CPRD49 (CPRD49).